A 353-amino-acid polypeptide reads, in one-letter code: Uroporphyrinogen decarboxylase (353 aa).

Residues 25–29, Asp-74, Tyr-151, Ser-206, and His-325 each bind substrate; that span reads RQAGR.

The protein belongs to the uroporphyrinogen decarboxylase family. As to quaternary structure, homodimer.

It localises to the cytoplasm. The catalysed reaction is uroporphyrinogen III + 4 H(+) = coproporphyrinogen III + 4 CO2. Its pathway is porphyrin-containing compound metabolism; protoporphyrin-IX biosynthesis; coproporphyrinogen-III from 5-aminolevulinate: step 4/4. Functionally, catalyzes the decarboxylation of four acetate groups of uroporphyrinogen-III to yield coproporphyrinogen-III. This Chloroherpeton thalassium (strain ATCC 35110 / GB-78) protein is Uroporphyrinogen decarboxylase.